Consider the following 103-residue polypeptide: Large ribosomal subunit protein bL21 (103 aa).

The protein belongs to the bacterial ribosomal protein bL21 family. In terms of assembly, part of the 50S ribosomal subunit. Contacts protein L20.

Its function is as follows. This protein binds to 23S rRNA in the presence of protein L20. This chain is Large ribosomal subunit protein bL21, found in Shewanella baltica (strain OS223).